Here is a 235-residue protein sequence, read N- to C-terminus: Large ribosomal subunit protein uL1 (235 aa).

Belongs to the universal ribosomal protein uL1 family. As to quaternary structure, part of the 50S ribosomal subunit.

Its function is as follows. Binds directly to 23S rRNA. The L1 stalk is quite mobile in the ribosome, and is involved in E site tRNA release. Functionally, protein L1 is also a translational repressor protein, it controls the translation of the L11 operon by binding to its mRNA. The chain is Large ribosomal subunit protein uL1 from Prochlorococcus marinus (strain AS9601).